The chain runs to 346 residues: Galanin receptor type 1 (346 aa).

The Extracellular segment spans residues 1 to 33; it reads MELAPVNLSEGNGSDPEPPAEPRPLFGIGVENF. N7 and N12 each carry an N-linked (GlcNAc...) asparagine glycan. A helical transmembrane segment spans residues 34-54; it reads ITLVVFGLIFAMGVLGNSLVI. At 55–69 the chain is on the cytoplasmic side; it reads TVLARSKPGKPRSTT. Residues 70–90 traverse the membrane as a helical segment; the sequence is NLFILNLSIADLAYLLFCIPF. Residues 91-108 lie on the Extracellular side of the membrane; it reads QATVYALPTWVLGAFICK. The cysteines at positions 107 and 185 are disulfide-linked. A helical membrane pass occupies residues 109–130; the sequence is FIHYFFTVSMLVSIFTLAAMSV. Over 131-150 the chain is Cytoplasmic; that stretch reads DRYVAIVHSRRSSSLRVSRN. A helical transmembrane segment spans residues 151 to 171; sequence ALLGVGFIWALSIAMASPVAY. Topologically, residues 172-196 are extracellular; that stretch reads YQRLFHRDSNQTFCWEHWPNQLHKK. Residue N181 is glycosylated (N-linked (GlcNAc...) asparagine). A helical membrane pass occupies residues 197-217; sequence AYVVCTFVFGYLLPLLLICFC. Residues 218-246 are Cytoplasmic-facing; sequence YAKVLNHLHKKLKNMSKKSEASKKKTAQT. Residues 247-267 form a helical membrane-spanning segment; the sequence is VLVVVVVFGISWLPHHVIHLW. The Extracellular portion of the chain corresponds to 268-269; that stretch reads AE. A helical membrane pass occupies residues 270–290; that stretch reads FGAFPLTPASFFFRITAHCLA. Topologically, residues 291–346 are cytoplasmic; sequence YSNSSVNPIIYAFLSENFRKAYKQVFKCRVCNESPHGDAKEKNRIDTPPSTNCTHV. C318 carries the S-palmitoyl cysteine lipid modification. Basic and acidic residues predominate over residues 326–335; that stretch reads HGDAKEKNRI. Positions 326–346 are disordered; the sequence is HGDAKEKNRIDTPPSTNCTHV.

Belongs to the G-protein coupled receptor 1 family. Interacts with GRP39 AND HTR1A. Three cysteine residues are found in the C-terminus, at least one of which may be palmitoylated. Spinal cord, small intestine, Rin14B insulinoma cells and several brain regions, particularly ventral hippocampus, amygdala, supraoptic nucleus, hypothalamus, thalamus, lateral parabrachial nucleus and locus coeruleus.

Its subcellular location is the cell membrane. Functionally, receptor for the hormone galanin. The activity of this receptor is mediated by G proteins that inhibit adenylate cyclase activity. In Rattus norvegicus (Rat), this protein is Galanin receptor type 1 (Galr1).